The chain runs to 475 residues: tRNA-2-methylthio-N(6)-dimethylallyladenosine synthase (475 aa).

Residues 2–119 (AKLHITTWGC…LPEMINQIRS (118 aa)) form the MTTase N-terminal domain. The [4Fe-4S] cluster site is built by cysteine 11, cysteine 48, cysteine 82, cysteine 156, cysteine 160, and cysteine 163. Residues 142-374 (KAEGPTAFVS…QQRINHQAMQ (233 aa)) form the Radical SAM core domain. The 64-residue stretch at 377–440 (RLMLGTEQRI…SNSLRGEVIR (64 aa)) folds into the TRAM domain.

This sequence belongs to the methylthiotransferase family. MiaB subfamily. In terms of assembly, monomer. [4Fe-4S] cluster serves as cofactor.

The protein resides in the cytoplasm. It catalyses the reaction N(6)-dimethylallyladenosine(37) in tRNA + (sulfur carrier)-SH + AH2 + 2 S-adenosyl-L-methionine = 2-methylsulfanyl-N(6)-dimethylallyladenosine(37) in tRNA + (sulfur carrier)-H + 5'-deoxyadenosine + L-methionine + A + S-adenosyl-L-homocysteine + 2 H(+). Its function is as follows. Catalyzes the methylthiolation of N6-(dimethylallyl)adenosine (i(6)A), leading to the formation of 2-methylthio-N6-(dimethylallyl)adenosine (ms(2)i(6)A) at position 37 in tRNAs that read codons beginning with uridine. This chain is tRNA-2-methylthio-N(6)-dimethylallyladenosine synthase, found in Haemophilus ducreyi (strain 35000HP / ATCC 700724).